A 139-amino-acid polypeptide reads, in one-letter code: Cystatin-11 (139 aa).

Residues 1–28 (MAAGSWKATRLLLAILVALVAFSYQVKR) form the signal peptide. 2 disulfides stabilise this stretch: C94–C102 and C115–C135. An N-linked (GlcNAc...) asparagine glycan is attached at N134.

This sequence belongs to the cystatin family. Expressed in epididymis, where it localizes to the proximal caput and also part of the midcaput. Not detected in other tissues tested.

The protein localises to the secreted. In terms of biological role, has antibacterial activity against the Gram-negative bacteria E.coli. May play a role in sperm maturation and fertilization. This is Cystatin-11 from Mus musculus (Mouse).